Reading from the N-terminus, the 147-residue chain is Cyanate hydratase (147 aa).

Active-site residues include R88, E91, and S114.

The protein belongs to the cyanase family.

It catalyses the reaction cyanate + hydrogencarbonate + 3 H(+) = NH4(+) + 2 CO2. Its function is as follows. Catalyzes the reaction of cyanate with bicarbonate to produce ammonia and carbon dioxide. This chain is Cyanate hydratase, found in Cupriavidus necator (strain ATCC 17699 / DSM 428 / KCTC 22496 / NCIMB 10442 / H16 / Stanier 337) (Ralstonia eutropha).